Consider the following 908-residue polypeptide: Transcriptional repressor ILP1 (908 aa).

2 disordered regions span residues 1–113 and 238–277; these read MGSN…PQAG and VGPRPQKDDKKGVFDFGDENPTAKETTTSSIYEDEDEEDK. The segment covering 25–47 has biased composition (low complexity); the sequence is ATPSSKPTSTLSSSKPKTLSASA. The stretch at 426–453 forms a coiled coil; that stretch reads MQNKGSLIEEIEDQMKELNEKHALSILE. The span at 513 to 530 shows a compositional bias: basic and acidic residues; it reads EFGRDENLQKRREVEQRA. Positions 513–574 are disordered; it reads EFGRDENLQK…ESDTETSAYK (62 aa).

This sequence belongs to the GCF family. As to quaternary structure, interacts with STIPL1/NTR1.

The protein localises to the nucleus. Functionally, transcriptional repressor regulating endoreduplication through control of A-type cyclins expression. Does not bind to promoter sequences (in vitro) and may act by interacting with tissue-specific transcription factors. Enhances the endocycle in endoreduplicating cells in seedlings. Required for efficient splicing. This chain is Transcriptional repressor ILP1, found in Arabidopsis thaliana (Mouse-ear cress).